A 382-amino-acid polypeptide reads, in one-letter code: Ribosomal RNA large subunit methyltransferase G (382 aa).

Belongs to the methyltransferase superfamily. RlmG family.

It is found in the cytoplasm. The enzyme catalyses guanosine(1835) in 23S rRNA + S-adenosyl-L-methionine = N(2)-methylguanosine(1835) in 23S rRNA + S-adenosyl-L-homocysteine + H(+). In terms of biological role, specifically methylates the guanine in position 1835 (m2G1835) of 23S rRNA. The sequence is that of Ribosomal RNA large subunit methyltransferase G from Aliivibrio fischeri (strain MJ11) (Vibrio fischeri).